Consider the following 1342-residue polypeptide: DNA-directed RNA polymerase subunit beta (1342 aa).

This sequence belongs to the RNA polymerase beta chain family. As to quaternary structure, the RNAP catalytic core consists of 2 alpha, 1 beta, 1 beta' and 1 omega subunit. When a sigma factor is associated with the core the holoenzyme is formed, which can initiate transcription.

The catalysed reaction is RNA(n) + a ribonucleoside 5'-triphosphate = RNA(n+1) + diphosphate. Functionally, DNA-dependent RNA polymerase catalyzes the transcription of DNA into RNA using the four ribonucleoside triphosphates as substrates. This is DNA-directed RNA polymerase subunit beta from Vibrio campbellii (strain ATCC BAA-1116).